The following is a 230-amino-acid chain: Uracil-DNA glycosylase (230 aa).

Asp70 acts as the Proton acceptor in catalysis.

Belongs to the uracil-DNA glycosylase (UDG) superfamily. UNG family.

The protein resides in the cytoplasm. It carries out the reaction Hydrolyzes single-stranded DNA or mismatched double-stranded DNA and polynucleotides, releasing free uracil.. Functionally, excises uracil residues from the DNA which can arise as a result of misincorporation of dUMP residues by DNA polymerase or due to deamination of cytosine. In Pseudomonas fluorescens (strain SBW25), this protein is Uracil-DNA glycosylase.